The chain runs to 507 residues: ATP synthase subunit alpha, chloroplastic (507 aa).

170-177 serves as a coordination point for ATP; the sequence is GDRQTGKT. At T257 the chain carries Phosphothreonine.

Belongs to the ATPase alpha/beta chains family. In terms of assembly, F-type ATPases have 2 components, CF(1) - the catalytic core - and CF(0) - the membrane proton channel. CF(1) has five subunits: alpha(3), beta(3), gamma(1), delta(1), epsilon(1). CF(0) has four main subunits: a, b, b' and c.

It is found in the plastid. It localises to the chloroplast thylakoid membrane. The enzyme catalyses ATP + H2O + 4 H(+)(in) = ADP + phosphate + 5 H(+)(out). In terms of biological role, produces ATP from ADP in the presence of a proton gradient across the membrane. The alpha chain is a regulatory subunit. The sequence is that of ATP synthase subunit alpha, chloroplastic from Aethionema grandiflorum (Persian stone-cress).